The chain runs to 97 residues: YcgL domain-containing protein APP7_0754 (97 aa).

The 85-residue stretch at 6-90 (NLCAIYKSPK…PPENLLKTFL (85 aa)) folds into the YcgL domain.

The chain is YcgL domain-containing protein APP7_0754 from Actinobacillus pleuropneumoniae serotype 7 (strain AP76).